Here is a 365-residue protein sequence, read N- to C-terminus: tRNA N6-adenosine threonylcarbamoyltransferase (365 aa).

Residues His119 and His123 each coordinate Fe cation. Substrate-binding positions include 141–145 (LVSGG), Asp174, Gly187, and Asn288. Residue Asp316 participates in Fe cation binding.

It belongs to the KAE1 / TsaD family. Requires Fe(2+) as cofactor.

It is found in the cytoplasm. It catalyses the reaction L-threonylcarbamoyladenylate + adenosine(37) in tRNA = N(6)-L-threonylcarbamoyladenosine(37) in tRNA + AMP + H(+). Functionally, required for the formation of a threonylcarbamoyl group on adenosine at position 37 (t(6)A37) in tRNAs that read codons beginning with adenine. Is involved in the transfer of the threonylcarbamoyl moiety of threonylcarbamoyl-AMP (TC-AMP) to the N6 group of A37, together with TsaE and TsaB. TsaD likely plays a direct catalytic role in this reaction. The sequence is that of tRNA N6-adenosine threonylcarbamoyltransferase from Rhizobium johnstonii (strain DSM 114642 / LMG 32736 / 3841) (Rhizobium leguminosarum bv. viciae).